The sequence spans 552 residues: DNA ligase (552 aa).

Residue glutamate 229 participates in ATP binding. Catalysis depends on lysine 231, which acts as the N6-AMP-lysine intermediate. Residues arginine 236 and glutamate 283 each contribute to the ATP site. Positions 283 and 377 each coordinate Mg(2+). 2 residues coordinate ATP: lysine 382 and lysine 397.

This sequence belongs to the ATP-dependent DNA ligase family. In terms of assembly, interacts with host TOP2A and TOP2B. Requires Mg(2+) as cofactor.

The protein resides in the host cytoplasm. It catalyses the reaction ATP + (deoxyribonucleotide)n-3'-hydroxyl + 5'-phospho-(deoxyribonucleotide)m = (deoxyribonucleotide)n+m + AMP + diphosphate.. Its function is as follows. DNA ligase that seals nicks in double-stranded DNA during DNA replication, DNA recombination and DNA repair. Recruits cellular topoisomerase II to sites of viral replication and assembly. The polypeptide is DNA ligase (OPG180) (Homo sapiens (Human)).